We begin with the raw amino-acid sequence, 425 residues long: Enolase (425 aa).

Glutamine 162 provides a ligand contact to (2R)-2-phosphoglycerate. The Proton donor role is filled by glutamate 204. Mg(2+) is bound by residues aspartate 241, glutamate 284, and aspartate 311. 4 residues coordinate (2R)-2-phosphoglycerate: lysine 336, arginine 365, serine 366, and lysine 387. The Proton acceptor role is filled by lysine 336.

It belongs to the enolase family. Mg(2+) is required as a cofactor.

It localises to the cytoplasm. Its subcellular location is the secreted. The protein resides in the cell surface. The catalysed reaction is (2R)-2-phosphoglycerate = phosphoenolpyruvate + H2O. It participates in carbohydrate degradation; glycolysis; pyruvate from D-glyceraldehyde 3-phosphate: step 4/5. Its function is as follows. Catalyzes the reversible conversion of 2-phosphoglycerate (2-PG) into phosphoenolpyruvate (PEP). It is essential for the degradation of carbohydrates via glycolysis. This Brucella ovis (strain ATCC 25840 / 63/290 / NCTC 10512) protein is Enolase.